We begin with the raw amino-acid sequence, 800 residues long: Metabotropic glutamate receptor-like protein C (800 aa).

The N-terminal stretch at 1 to 21 (MKMKIIFLILILIFSINIIKC) is a signal peptide. Residues 22–392 (DKEFKMLTLL…EVEFSQSLQY (371 aa)) are Extracellular-facing. N-linked (GlcNAc...) asparagine glycans are attached at residues N69, N107, N166, N258, N276, N302, and N345. The chain crosses the membrane as a helical span at residues 393-413 (GFSITTGVLIAITIIMMLGIV). At 414-426 (RYKSTPSIRSASP) the chain is on the cytoplasmic side. A helical transmembrane segment spans residues 427-447 (IFLNFILAGGIIVYIGIIVWV). Residues 448-463 (GPANDHQCNARLWLVT) lie on the Extracellular side of the membrane. A helical membrane pass occupies residues 464-484 (LGFSTLIGSLVVKNFRIWLIF). The Cytoplasmic portion of the chain corresponds to 485–499 (DNPELKSISITNYQL). The helical transmembrane segment at 500 to 520 (FPWVGACLVINIILMSILTSV) threads the bilayer. Over 521-551 (GDLREIDAQGIDSLGKYEFMKVCKMNSSGAS) the chain is Extracellular. N-linked (GlcNAc...) asparagine glycosylation is present at N546. A helical transmembrane segment spans residues 552 to 572 (TLYTILAYFAALLLVGVFVSW). Residues 573–586 (KIRIVDIQEFNESK) lie on the Cytoplasmic side of the membrane. A helical transmembrane segment spans residues 587–607 (AIANTLYAISFCLFVIVPLMI). The Extracellular portion of the chain corresponds to 608-616 (SPQDKQSET). The helical transmembrane segment at 617 to 637 (IVLCTAGLFITTAALLIIFTP) threads the bilayer. Residues 638-800 (KFWRVFTLGD…NDTEEEDKNQ (163 aa)) lie on the Cytoplasmic side of the membrane. 2 disordered regions span residues 658–694 (QSNV…TETS) and 718–800 (EFDD…DKNQ). The segment covering 718-732 (EFDDNNIEQDNDNDN) has biased composition (acidic residues). The span at 733–774 (DNNNNNNNNNNNNNNNNNNNNNNNNNNNNNNNNNNNNNNNNN) shows a compositional bias: low complexity. Basic and acidic residues predominate over residues 781-791 (NDEKVEEKQQN).

It in the N-terminal section; belongs to the BMP lipoprotein family. This sequence in the C-terminal section; belongs to the G-protein coupled receptor 3 family. GABA-B receptor subfamily.

The protein resides in the membrane. The polypeptide is Metabotropic glutamate receptor-like protein C (grlC) (Dictyostelium discoideum (Social amoeba)).